Here is a 1940-residue protein sequence, read N- to C-terminus: Myosin-2 (1940 aa).

The Myosin N-terminal SH3-like domain occupies 33-82; sequence DAKTSVFVAEPKESFVKGTIQSREGGKVTVKTEGGATLTVKEDQVFPMNP. A phosphothreonine mark is found at Thr-64 and Thr-69. One can recognise a Myosin motor domain in the interval 86-783; it reads DKIEDMAMMT…LLGLLEEMRD (698 aa). At Lys-130 the chain carries N6,N6,N6-trimethyllysine. 179-186 is a binding site for ATP; sequence GESGAGKT. Tyr-389 is modified (phosphotyrosine). A Phosphoserine modification is found at Ser-392. At Thr-419 the chain carries Phosphothreonine. Ser-625 bears the Phosphoserine mark. Residues 660-682 form an actin-binding region; sequence LNKLMTNLRSTHPHFVRCIIPNE. His-758 is modified (pros-methylhistidine). An actin-binding region spans residues 762 to 776; that stretch reads KFGHTKVFFKAGLLG. Residues 786–815 enclose the IQ domain; it reads LAQLMTRTQARCRGFLARVEYQKMVERRES. Residues 844–1940 adopt a coiled-coil conformation; that stretch reads LLKSAETEKE…EVHTKIISEE (1097 aa). Ser-1093, Ser-1097, Ser-1163, and Ser-1238 each carry phosphoserine. A Phosphothreonine modification is found at Thr-1242. At Ser-1244 the chain carries Phosphoserine. Thr-1256 and Thr-1287 each carry phosphothreonine. Phosphoserine occurs at positions 1289, 1293, 1304, and 1307. Tyr-1465 carries the phosphotyrosine modification. A Phosphothreonine modification is found at Thr-1468. A Phosphotyrosine modification is found at Tyr-1493. A Phosphoserine modification is found at Ser-1496. At Thr-1502 the chain carries Phosphothreonine. Ser-1515 carries the post-translational modification Phosphoserine. Thr-1518 bears the Phosphothreonine mark. Phosphoserine occurs at positions 1543, 1555, 1575, 1601, 1715, and 1727. Residues Thr-1731 and Thr-1737 each carry the phosphothreonine modification. The disordered stretch occupies residues 1886–1905; that stretch reads QAEEAEEQSNTNLSKFRKLQ.

It belongs to the TRAFAC class myosin-kinesin ATPase superfamily. Myosin family. In terms of assembly, muscle myosin is a hexameric protein that consists of 2 heavy chain subunits (MHC), 2 alkali light chain subunits (MLC) and 2 regulatory light chain subunits (MLC-2). Interacts with GCSAM.

It is found in the cytoplasm. The protein resides in the myofibril. Functionally, myosins are actin-based motor molecules with ATPase activity essential for muscle contraction. The sequence is that of Myosin-2 (MYH2) from Bos taurus (Bovine).